A 208-amino-acid polypeptide reads, in one-letter code: FMN-dependent NADH:quinone oxidoreductase (208 aa).

Residues Ser9, 15–17 (SVS), 96–99 (MYNF), and 140–143 (TRGG) each bind FMN.

This sequence belongs to the azoreductase type 1 family. Homodimer. The cofactor is FMN.

The catalysed reaction is 2 a quinone + NADH + H(+) = 2 a 1,4-benzosemiquinone + NAD(+). It carries out the reaction N,N-dimethyl-1,4-phenylenediamine + anthranilate + 2 NAD(+) = 2-(4-dimethylaminophenyl)diazenylbenzoate + 2 NADH + 2 H(+). Its function is as follows. Quinone reductase that provides resistance to thiol-specific stress caused by electrophilic quinones. Functionally, also exhibits azoreductase activity. Catalyzes the reductive cleavage of the azo bond in aromatic azo compounds to the corresponding amines. In Azospirillum brasilense, this protein is FMN-dependent NADH:quinone oxidoreductase.